Consider the following 209-residue polypeptide: MSIEKQVAEQLLEIKAVFLKPNEPFTWASGIKSPIYCDNRLTLGFPKVRQFIAKSLAEKIKQTFGEIDVVAGTATAGIPHAAWVSDLLDLPMVYVRSKAKEHGKGNQIEGPISKGQKVVVIEDLISTGGSSLKAVEALEEAGAEVVGIAAIFTYGLAKGKQLLEESGTKLVTLTNYDELIEVALNENYVTGEDMETLKEWKKNPEKWGK.

5-phospho-alpha-D-ribose 1-diphosphate is bound by residues Arg-96, Lys-100, His-102, and Glu-122 to Ser-130. Residue Ser-126 coordinates orotate.

The protein belongs to the purine/pyrimidine phosphoribosyltransferase family. PyrE subfamily. As to quaternary structure, homodimer. The cofactor is Mg(2+).

It catalyses the reaction orotidine 5'-phosphate + diphosphate = orotate + 5-phospho-alpha-D-ribose 1-diphosphate. The protein operates within pyrimidine metabolism; UMP biosynthesis via de novo pathway; UMP from orotate: step 1/2. Catalyzes the transfer of a ribosyl phosphate group from 5-phosphoribose 1-diphosphate to orotate, leading to the formation of orotidine monophosphate (OMP). The sequence is that of Orotate phosphoribosyltransferase from Listeria monocytogenes serovar 1/2a (strain ATCC BAA-679 / EGD-e).